The primary structure comprises 303 residues: Glutathione transport system permease protein GsiD (303 aa).

7 helical membrane passes run 37–57, 105–125, 144–164, 165–185, 208–228, 230–250, and 266–286; these read QHVA…AIFA, LAAG…LGLL, LFAF…GSGI, ANVI…LVRG, TILF…FFTM, IGTS…AQPP, and VIAP…VLAF. An ABC transmembrane type-1 domain is found at 101-290; that stretch reads AQISLAAGVF…LTVLAFNLLG (190 aa).

The protein belongs to the binding-protein-dependent transport system permease family. As to quaternary structure, the complex is composed of two ATP-binding proteins (GsiA), two transmembrane proteins (GsiC and GsiD) and a solute-binding protein (GsiB).

It is found in the cell inner membrane. In terms of biological role, part of the ABC transporter complex GsiABCD involved in glutathione import. Probably responsible for the translocation of the substrate across the membrane. In Salmonella paratyphi A (strain ATCC 9150 / SARB42), this protein is Glutathione transport system permease protein GsiD.